Reading from the N-terminus, the 144-residue chain is MDIKEVREYLPHRYPFLLIDRVLNIEPGKRIEALKNVTINEPFFNGHFPEEPIMPGVLIIEAMAQAAGILGFVTENKKPSDGYIYLLVGTDKARFKRQVVPGDTLHLFAEYVVIKRNIIKFTCEAQVDGKTVASAEMLVAEQKV.

Residue His-47 is part of the active site.

It belongs to the thioester dehydratase family. FabZ subfamily.

It localises to the cytoplasm. The enzyme catalyses a (3R)-hydroxyacyl-[ACP] = a (2E)-enoyl-[ACP] + H2O. Its function is as follows. Involved in unsaturated fatty acids biosynthesis. Catalyzes the dehydration of short chain beta-hydroxyacyl-ACPs and long chain saturated and unsaturated beta-hydroxyacyl-ACPs. The polypeptide is 3-hydroxyacyl-[acyl-carrier-protein] dehydratase FabZ (Alcanivorax borkumensis (strain ATCC 700651 / DSM 11573 / NCIMB 13689 / SK2)).